Reading from the N-terminus, the 389-residue chain is Chalcone synthase (389 aa).

The active site involves Cys-164.

Belongs to the thiolase-like superfamily. Chalcone/stilbene synthases family.

It carries out the reaction (E)-4-coumaroyl-CoA + 3 malonyl-CoA + 3 H(+) = 2',4,4',6'-tetrahydroxychalcone + 3 CO2 + 4 CoA. Its pathway is secondary metabolite biosynthesis; flavonoid biosynthesis. The primary product of this enzyme is 4,2',4',6'-tetrahydroxychalcone (also termed naringenin-chalcone or chalcone) which can under specific conditions spontaneously isomerize into naringenin. The protein is Chalcone synthase (CHS1) of Casuarina glauca (Swamp oak).